Here is a 351-residue protein sequence, read N- to C-terminus: Translation initiation factor eIF2B subunit beta (351 aa).

Belongs to the eIF-2B alpha/beta/delta subunits family. Component of the translation initiation factor 2B (eIF2B) complex which is a heterodecamer of two sets of five different subunits: alpha, beta, gamma, delta and epsilon. Subunits alpha, beta and delta comprise a regulatory subcomplex and subunits epsilon and gamma comprise a catalytic subcomplex. Within the complex, the hexameric regulatory complex resides at the center, with the two heterodimeric catalytic subcomplexes bound on opposite sides.

Its subcellular location is the cytoplasm. The protein localises to the cytosol. Its activity is regulated as follows. Activated by the chemical integrated stress response (ISR) inhibitor ISRIB which stimulates guanine nucleotide exchange factor activity for both phosphorylated and unphosphorylated eIF2. Its function is as follows. Acts as a component of the translation initiation factor 2B (eIF2B) complex, which catalyzes the exchange of GDP for GTP on eukaryotic initiation factor 2 (eIF2) gamma subunit. Its guanine nucleotide exchange factor activity is repressed when bound to eIF2 complex phosphorylated on the alpha subunit, thereby limiting the amount of methionyl-initiator methionine tRNA available to the ribosome and consequently global translation is repressed. The polypeptide is Translation initiation factor eIF2B subunit beta (Eif2b2) (Mus musculus (Mouse)).